A 101-amino-acid polypeptide reads, in one-letter code: MVDISRELQVAISTGKVVMGFKEVKKTILTSTPKLVILAANAPKWAKEDVEYYAKLAGVPVFIFPGSSIELGAAAKRPHKIMALAVIDPGQSEILKLVEHA.

It belongs to the eukaryotic ribosomal protein eL30 family.

This Pyrobaculum islandicum (strain DSM 4184 / JCM 9189 / GEO3) protein is Large ribosomal subunit protein eL30.